A 136-amino-acid chain; its full sequence is HTH-type transcriptional regulator LrpA (136 aa).

The region spanning 2 to 63 (IDEIDKKILD…EVNQVKLGFS (62 aa)) is the HTH asnC-type domain. Residues 21-40 (MKKLGEKVHLTAPATASRVV) constitute a DNA-binding region (H-T-H motif).

Its function is as follows. Negative regulation of glyA transcription and kinB-dependent sporulation. The sequence is that of HTH-type transcriptional regulator LrpA (lrpA) from Bacillus subtilis (strain 168).